The primary structure comprises 103 residues: Protein E7 (103 aa).

The E7 terminal domain stretch occupies residues 1–47 (MIGKEVTVQDIILELSEVQPEVLPVDLFCEEELPNEQETEEEPDIER). An LXCXE motif; interaction with host RB1 and TMEM173/STING motif is present at residues 27–31 (LFCEE). A zinc finger lies at 56–94 (CGCRHCEVKLRIFVHATEFGIRAFQQLLTGDLQLLCPDC). The Nuclear export signal signature appears at 76 to 84 (IRAFQQLLT).

It belongs to the papillomaviridae E7 protein family. As to quaternary structure, homodimer. Homooligomer. Interacts with host RB1; this interaction induces dissociation of RB1-E2F1 complex thereby disrupting RB1 activity. Interacts with host EP300; this interaction represses EP300 transcriptional activity. Interacts with protein E2; this interaction inhibits E7 oncogenic activity. Interacts with host TMEM173/STING; this interaction impairs the ability of TMEM173/STING to sense cytosolic DNA and promote the production of type I interferon (IFN-alpha and IFN-beta). In terms of processing, highly phosphorylated.

Its subcellular location is the host cytoplasm. The protein resides in the host nucleus. In terms of biological role, plays a role in viral genome replication by driving entry of quiescent cells into the cell cycle. Stimulation of progression from G1 to S phase allows the virus to efficiently use the cellular DNA replicating machinery to achieve viral genome replication. E7 protein has both transforming and trans-activating activities. Induces the disassembly of the E2F1 transcription factor from RB1, with subsequent transcriptional activation of E2F1-regulated S-phase genes. Interferes with host histone deacetylation mediated by HDAC1 and HDAC2, leading to transcription activation. Also plays a role in the inhibition of both antiviral and antiproliferative functions of host interferon alpha. Interaction with host TMEM173/STING impairs the ability of TMEM173/STING to sense cytosolic DNA and promote the production of type I interferon (IFN-alpha and IFN-beta). In Homo sapiens (Human), this protein is Protein E7.